Reading from the N-terminus, the 481-residue chain is Ammonium transporter 2 member 3 (481 aa).

The Extracellular portion of the chain corresponds to Met-1–Thr-36. A glycan (N-linked (GlcNAc...) asparagine) is linked at Asn-4. The chain crosses the membrane as a helical span at residues Ala-37 to Val-57. Residues Lys-58–Ala-62 lie on the Cytoplasmic side of the membrane. The chain crosses the membrane as a helical span at residues Val-63 to Trp-83. The Extracellular portion of the chain corresponds to Ala-84 to Asp-123. The helical transmembrane segment at Phe-124–Leu-144 threads the bilayer. Residues Gly-145 to Ala-151 lie on the Cytoplasmic side of the membrane. A helical membrane pass occupies residues Trp-152–Trp-172. Topologically, residues Gly-173–Tyr-184 are extracellular. Residues Ala-185–Val-205 traverse the membrane as a helical segment. Over Gly-206–Asn-220 the chain is Cytoplasmic. Residues Ile-221–Gly-241 form a helical membrane-spanning segment. The Extracellular segment spans residues Ala-242 to Glu-248. A helical transmembrane segment spans residues Ile-249 to Ile-269. Residues Ser-270–Leu-281 lie on the Cytoplasmic side of the membrane. Residues Ile-282 to Val-302 traverse the membrane as a helical segment. Residues Asp-303–Pro-304 lie on the Extracellular side of the membrane. A helical membrane pass occupies residues Trp-305–Leu-325. At His-326 to Thr-338 the chain is on the cytoplasmic side. A helical transmembrane segment spans residues Leu-339 to Phe-359. Residues Ala-360–Lys-363 lie on the Extracellular side of the membrane. Residues Leu-364–Phe-381 traverse the membrane as a helical segment. The Cytoplasmic segment spans residues Asp-382–Gln-395. A helical membrane pass occupies residues Leu-396–Leu-416. Topologically, residues Leu-417–Glu-481 are extracellular.

The protein belongs to the ammonia transporter channel (TC 1.A.11.2) family. As to expression, mostly expressed in mycorrhizal roots. Also observed in the cortex and endodermis of non-mycorrhizal roots.

The protein localises to the cell membrane. Its function is as follows. Involved in ammonium transport. Required for arbuscular mycorrhizal (AM) symbiosis with AM fungi (e.g. Glomus versiforme and G.intraradices) in low nitrogen conditions. The chain is Ammonium transporter 2 member 3 from Medicago truncatula (Barrel medic).